The chain runs to 217 residues: Fucoxanthin-chlorophyll a-c binding protein B, chloroplastic (217 aa).

The N-terminal 39 residues, 1-39, are a transit peptide targeting the chloroplast; the sequence is MKSAVMAVACAAAPGFRGPSAFNGAALTTSAKACSAMKM. 3 helical membrane-spanning segments follow: residues 81-101, 122-142, and 183-203; these read IAML…PGML, IPPA…LAVM, and GRAA…NNKP.

The protein belongs to the fucoxanthin chlorophyll protein family. As to quaternary structure, the LHC complex of chromophytic algae is composed of fucoxanthin, chlorophyll A and C bound non-covalently by fucoxanthin chlorophyll proteins (FCPs). The ratio of pigments in this LHC is; fucoxanthin: chlorophyll C: chlorophyll A; (0.6-1): (0.1-0.3): (1).

The protein localises to the plastid. The protein resides in the chloroplast thylakoid membrane. In terms of biological role, the light-harvesting complex (LHC) functions as a light receptor, it captures and delivers excitation energy to photosystems with which it is closely associated. Energy is transferred from the carotenoid and chlorophyll C (or B) to chlorophyll A and the photosynthetic reaction centers where it is used to synthesize ATP and reducing power. This is Fucoxanthin-chlorophyll a-c binding protein B, chloroplastic (FCPB) from Macrocystis pyrifera (Giant kelp).